A 761-amino-acid polypeptide reads, in one-letter code: Elongation factor G, mitochondrial (761 aa).

Residues 1-42 (MSVQKMMWVPRKMVGGRIPFFTCSKVFSGFSRRSFHESPLAR) constitute a mitochondrion transit peptide. The tr-type G domain maps to 68 to 349 (NKLRNIGISA…AIVDYLPNPS (282 aa)). Residues 77–84 (AHIDSGKT), 148–152 (DTPGH), and 202–205 (NKMD) contribute to the GTP site.

It belongs to the TRAFAC class translation factor GTPase superfamily. Classic translation factor GTPase family. EF-G/EF-2 subfamily. Post-translationally, the precursor is processed in two steps involving mitochondrial intermediate peptidase (MIP) and mitochondrial processing peptidase (MPP).

It is found in the mitochondrion. It participates in protein biosynthesis; polypeptide chain elongation. Mitochondrial GTPase that catalyzes the GTP-dependent ribosomal translocation step during translation elongation. During this step, the ribosome changes from the pre-translocational (PRE) to the post-translocational (POST) state as the newly formed A-site-bound peptidyl-tRNA and P-site-bound deacylated tRNA move to the P and E sites, respectively. Catalyzes the coordinated movement of the two tRNA molecules, the mRNA and conformational changes in the ribosome. This Saccharomyces cerevisiae (strain ATCC 204508 / S288c) (Baker's yeast) protein is Elongation factor G, mitochondrial.